Here is a 178-residue protein sequence, read N- to C-terminus: Caveolin-1 (178 aa).

An N-acetylserine modification is found at S2. S2 bears the Phosphoserine mark. Positions 2–94 (SGGKYVDSEG…WKASFTTFTV (93 aa)) are required for homooligomerization. At 2 to 104 (SGGKYVDSEG…TKYWFYRLLS (103 aa)) the chain is on the cytoplasmic side. Position 5 is an N6-acetyllysine; alternate (K5). K5 participates in a covalent cross-link: Glycyl lysine isopeptide (Lys-Gly) (interchain with G-Cter in ubiquitin); alternate. Y6 carries the post-translational modification Phosphotyrosine. S9 is modified (phosphoserine). Y14 carries the post-translational modification Phosphotyrosine; by ABL1. At Y25 the chain carries Phosphotyrosine. Glycyl lysine isopeptide (Lys-Gly) (interchain with G-Cter in ubiquitin) cross-links involve residues K26, K30, K39, K47, and K57. The interaction with CAVIN3 stretch occupies residues 82–94 (DGIWKASFTTFTV). The helical intramembrane region spans 105 to 125 (ALFGIPMALIWGIYFAILSFL). At 126 to 178 (HIWAVVPCIKSFLIEIQCISRVYSIYVHTFCDPLFEAIGKIFSNIRINMQKEI) the chain is on the cytoplasmic side. Residues 131–142 (VPCIKSFLIEIQ) form an interacts with SPRY1, SPRY2, SPRY3 and SPRY4 region. 3 S-palmitoyl cysteine lipidation sites follow: C133, C143, and C156. Residues 149–160 (SIYVHTFCDPLF) form an interacts with SPRY1, SPRY2, and SPRY4 region. The interacts with SPRY1, SPRY2, SPRY3 and SPRY4 stretch occupies residues 167–178 (FSNIRINMQKEI).

It belongs to the caveolin family. Homooligomer. Interacts (via the N-terminus) with DPP4; the interaction is direct. Forms a stable heterooligomeric complex with CAV2 that targets to lipid rafts and drives caveolae formation. Interacts with PACSIN2; this interaction induces membrane tubulation. Interacts with BMX, BTK, CTNNB1, CDH1, GLIPR2, JUP, NOSTRIN, SNAP25 and STX1A. Interacts with SLC7A9. Interacts with TGFBR1. Interacts with CAVIN3 (via leucine-zipper domain) in a cholesterol-sensitive manner. Interacts with CAVIN1. Interacts with EHD2 in a cholesterol-dependent manner. Forms a ternary complex with UBXN6 and VCP; mediates CAV1 targeting to lysosomes for degradation. Interacts with ABCG1; this interaction regulates ABCG1-mediated cholesterol efflux. Interacts with NEU3; this interaction enhances NEU3 sialidase activity within caveola. Interacts (via C-terminus) with SPRY1, SPRY2 (via C-terminus), SPRY3, and SPRY4. Phosphorylated at Tyr-14 by ABL1 in response to oxidative stress. In terms of processing, ubiquitinated. Undergo monoubiquitination and multi- and/or polyubiquitination. Monoubiquitination of N-terminal lysines promotes integration in a ternary complex with UBXN6 and VCP which promotes oligomeric CAV1 targeting to lysosomes for degradation. Ubiquitinated by ZNRF1; leading to degradation and modulation of the TLR4-mediated immune response.

It is found in the golgi apparatus membrane. Its subcellular location is the cell membrane. It localises to the membrane. The protein resides in the caveola. The protein localises to the membrane raft. Functionally, may act as a scaffolding protein within caveolar membranes. Forms a stable heterooligomeric complex with CAV2 that targets to lipid rafts and drives caveolae formation. Mediates the recruitment of CAVIN proteins (CAVIN1/2/3/4) to the caveolae. Interacts directly with G-protein alpha subunits and can functionally regulate their activity. Involved in the costimulatory signal essential for T-cell receptor (TCR)-mediated T-cell activation. Its binding to DPP4 induces T-cell proliferation and NF-kappa-B activation in a T-cell receptor/CD3-dependent manner. Recruits CTNNB1 to caveolar membranes and may regulate CTNNB1-mediated signaling through the Wnt pathway. Negatively regulates TGFB1-mediated activation of SMAD2/3 by mediating the internalization of TGFBR1 from membrane rafts leading to its subsequent degradation. Binds 20(S)-hydroxycholesterol (20(S)-OHC). The polypeptide is Caveolin-1 (CAV1) (Otolemur garnettii (Small-eared galago)).